The sequence spans 226 residues: High affinity heme transporter (226 aa).

The signal sequence occupies residues 1–20 (MISLKIYFVLIFLFLKGINS). The tract at residues 72–101 (CDTTILSETNNVTGSCYVANCANDTVLEIC) is heme binding. The GPI-anchor amidated serine moiety is linked to residue S199. A propeptide spans 200-226 (SASSTIFKPSYFISCLLSVGLYLVLNF) (removed in mature form).

It localises to the cell membrane. The protein localises to the vacuole membrane. Its function is as follows. High affinity heme transporter involved in the assimilation of exogenous heme during conditions of low cellular iron. The chain is High affinity heme transporter from Schizosaccharomyces pombe (strain 972 / ATCC 24843) (Fission yeast).